Consider the following 1314-residue polypeptide: E3 ubiquitin-protein ligase RNF123 (1314 aa).

Alanine 2 is modified (N-acetylalanine). Residues 74–254 (VDSEDNESQG…VAFNFGSRPL (181 aa)) enclose the B30.2/SPRY domain. Residues 460 to 483 (HRSSRESRDGKEAREETTEERQRR) are disordered. Basic and acidic residues predominate over residues 462-483 (SSRESRDGKEAREETTEERQRR). At serine 675 the chain carries Phosphoserine. Arginine 683 is subject to Asymmetric dimethylarginine. The interaction with NFKB1 stretch occupies residues 968-974 (WILVRLW). 8 residues coordinate Zn(2+): cysteine 1254, cysteine 1257, cysteine 1269, histidine 1271, cysteine 1274, cysteine 1277, cysteine 1288, and cysteine 1291. The RING-type zinc-finger motif lies at 1254–1292 (CPICYAHPISAVFQPCGHKSCKACINQHLMNNKDCFFCK).

As to quaternary structure, component of the KPC complex composed of RNF123/KPC1 and UBAC1/KPC2. Interacts with UBAC1 and CDKN1B via its N-terminal domain. Interacts with RIGI (via N-terminus) and IFIH1 (via N-terminus). In terms of processing, ubiquitinated, leading to its degradation. Deubiquitinated by USP19, thereby stimulating CDKN1B ubiquitin-dependent degradation.

The protein resides in the cytoplasm. It catalyses the reaction S-ubiquitinyl-[E2 ubiquitin-conjugating enzyme]-L-cysteine + [acceptor protein]-L-lysine = [E2 ubiquitin-conjugating enzyme]-L-cysteine + N(6)-ubiquitinyl-[acceptor protein]-L-lysine.. It participates in protein modification; protein ubiquitination. Functionally, catalytic subunit of the KPC complex that acts as E3 ubiquitin-protein ligase. Promotes the ubiquitination and proteasome-mediated degradation of CDKN1B which is the cyclin-dependent kinase inhibitor at the G0-G1 transition of the cell cycle. Also acts as a key regulator of the NF-kappa-B signaling by promoting maturation of the NFKB1 component of NF-kappa-B: acts by catalyzing ubiquitination of the NFKB1 p105 precursor, leading to limited proteasomal degradation of NFKB1 p105 and generation of the active NFKB1 p50 subunit. Functions also as an inhibitor of innate antiviral signaling mediated by RIGI and IFIH1 independently of its E3 ligase activity. Interacts with the N-terminal CARD domains of RIGI and IFIH1 and competes with the downstream adapter MAVS. In Mus musculus (Mouse), this protein is E3 ubiquitin-protein ligase RNF123 (Rnf123).